A 984-amino-acid polypeptide reads, in one-letter code: Vacuolar sorting protein 3 (984 aa).

The CNH domain maps to 21–339; sequence KIRALSLSPI…GCGPSLLAAD (319 aa). The CHCR repeat unit spans residues 663–844; that stretch reads VLTSDKRTEE…YLDPQNGKEP (182 aa).

It belongs to the TRAP1 family. As to quaternary structure, component of the class C core vacuole/endosome tethering (CORVET) complex. Their common core is composed of the class C Vps core proteins VPS11, VCL1, VPS18 and VPS33, which in CORVET further associates with VPS3. Interacts directly with VPS11. Binds to RABF2A and RABF2B.

It localises to the endosome membrane. Its subcellular location is the cytoplasm. In terms of biological role, essential protein required during embryogenesis. Believed to act as a component of the putative class C core vacuole/endosome tethering (CORVET) endosomal tethering complexes. CORVET is required for vacuolar transport of SYP22. Involved in root development. Plays a role in vesicle-mediated protein trafficking of the endocytic membrane transport pathway. In Arabidopsis thaliana (Mouse-ear cress), this protein is Vacuolar sorting protein 3.